Consider the following 262-residue polypeptide: Probable ketoamine kinase TTHA1179 (262 aa).

79-81 (AYL) contributes to the ATP binding site. The active-site Proton acceptor is Asp-172.

The protein belongs to the fructosamine kinase family.

The catalysed reaction is N(6)-(D-ribulosyl)-L-lysine + ATP = N(6)-(3-O-phospho-D-ribulosyl)-L-lysine + ADP + H(+). The enzyme catalyses N(6)-(D-erythrulosyl)-L-lysine + ATP = N(6)-(3-O-phospho-D-erythrulosyl)-L-lysine + ADP + H(+). It carries out the reaction N(6)-D-ribulosyl-L-lysyl-[protein] + ATP = N(6)-(3-O-phospho-D-ribulosyl)-L-lysyl-[protein] + ADP + H(+). It catalyses the reaction N(6)-(D-erythrulosyl)-L-lysyl-[protein] + ATP = N(6)-(3-O-phospho-D-erythrulosyl)-L-lysyl-[protein] + ADP + H(+). Functionally, ketoamine kinase that phosphorylates ketoamines, such as erythruloselysine and ribuloselysine, on the third carbon of the sugar moiety to generate ketoamine 3-phosphate. Has higher activity on free lysine (erythruloselysine and ribuloselysine), than on ribuloselysine and erythruloselysine residues on glycated proteins. The sequence is that of Probable ketoamine kinase TTHA1179 from Thermus thermophilus (strain ATCC 27634 / DSM 579 / HB8).